Reading from the N-terminus, the 235-residue chain is (5-formylfuran-3-yl)methyl phosphate synthase (235 aa).

Lys27 serves as the catalytic Schiff-base intermediate with substrate. The Proton acceptor role is filled by Lys85.

This sequence belongs to the MfnB family. In terms of assembly, homohexamer. Trimer of dimers.

It catalyses the reaction 2 D-glyceraldehyde 3-phosphate = 4-(hydroxymethyl)-2-furancarboxaldehyde phosphate + phosphate + 2 H2O. The protein operates within cofactor biosynthesis; methanofuran biosynthesis. Its function is as follows. Catalyzes the formation of 4-(hydroxymethyl)-2-furancarboxaldehyde phosphate (4-HFC-P) from two molecules of glyceraldehyde-3-P (GA-3-P). The protein is (5-formylfuran-3-yl)methyl phosphate synthase of Methanocaldococcus jannaschii (strain ATCC 43067 / DSM 2661 / JAL-1 / JCM 10045 / NBRC 100440) (Methanococcus jannaschii).